Here is a 255-residue protein sequence, read N- to C-terminus: PHD finger protein ALFIN-LIKE 4 (255 aa).

Position 1 is an N-acetylmethionine (methionine 1). The tract at residues 145–200 is disordered; sequence GKDKSSVSNNSSNRSKSSSKRGSESRAKFSKPEPKDDEEEEEEGVEEEDEDEQGET. The span at 150 to 160 shows a compositional bias: low complexity; the sequence is SVSNNSSNRSK. Basic and acidic residues predominate over residues 165–178; it reads RGSESRAKFSKPEP. The span at 179-198 shows a compositional bias: acidic residues; it reads KDDEEEEEEGVEEEDEDEQG. The segment at 199–251 adopts a PHD-type zinc-finger fold; that stretch reads ETQCGACGESYAADEFWICCDLCEMWFHGKCVKITPARAEHIKQYKCPSCSNK.

It belongs to the Alfin family. Interacts with H3K4me3 and to a lesser extent with H3K4me2. In terms of tissue distribution, ubiquitously expressed.

The protein localises to the nucleus. Histone-binding component that specifically recognizes H3 tails trimethylated on 'Lys-4' (H3K4me3), which mark transcription start sites of virtually all active genes. The protein is PHD finger protein ALFIN-LIKE 4 (AL4) of Arabidopsis thaliana (Mouse-ear cress).